A 370-amino-acid chain; its full sequence is Small ribosomal subunit biogenesis GTPase RsgA (370 aa).

One can recognise a CP-type G domain in the interval 111 to 270 (RSEGQILAAN…LIDTPGLRGV (160 aa)). Residues 158–161 (TKAD) and 212–220 (GQSGAGKST) each bind GTP. Zn(2+)-binding residues include cysteine 293, cysteine 298, histidine 300, and cysteine 306.

Belongs to the TRAFAC class YlqF/YawG GTPase family. RsgA subfamily. In terms of assembly, monomer. Associates with 30S ribosomal subunit, binds 16S rRNA. Zn(2+) is required as a cofactor.

Its subcellular location is the cytoplasm. In terms of biological role, one of several proteins that assist in the late maturation steps of the functional core of the 30S ribosomal subunit. Helps release RbfA from mature subunits. May play a role in the assembly of ribosomal proteins into the subunit. Circularly permuted GTPase that catalyzes slow GTP hydrolysis, GTPase activity is stimulated by the 30S ribosomal subunit. The protein is Small ribosomal subunit biogenesis GTPase RsgA of Streptomyces avermitilis (strain ATCC 31267 / DSM 46492 / JCM 5070 / NBRC 14893 / NCIMB 12804 / NRRL 8165 / MA-4680).